Here is a 163-residue protein sequence, read N- to C-terminus: Regulatory protein RecX (163 aa).

Residues 1–21 are disordered; the sequence is MSDAEDIPTGRKRRPREQTPV.

It belongs to the RecX family.

The protein resides in the cytoplasm. Its function is as follows. Modulates RecA activity. The chain is Regulatory protein RecX from Stenotrophomonas maltophilia (strain K279a).